A 533-amino-acid polypeptide reads, in one-letter code: (E)-beta-farnesene synthase (533 aa).

Residues Asp-286, Asp-290, Asn-430, Ser-434, and Glu-438 each coordinate Mg(2+). A DDXXD motif motif is present at residues 286 to 290 (DDMMD).

It belongs to the terpene synthase family. It depends on Mg(2+) as a cofactor. Co(2+) serves as cofactor. Mn(2+) is required as a cofactor.

The protein resides in the cytoplasm. It carries out the reaction (2E,6E)-farnesyl diphosphate = (E)-beta-farnesene + diphosphate. The protein operates within secondary metabolite biosynthesis; terpenoid biosynthesis. In terms of biological role, sesquiterpene cyclase catalyzing the production of sixfold more beta-farnesene than alpha-bergamotene from farnesyl diphosphate. Involved in indirect defense by producing volatile signals attracting natural enemies of herbivores. The protein is (E)-beta-farnesene synthase of Zea perennis (Perennial teosinte).